Reading from the N-terminus, the 57-residue chain is Temporin-ALk (57 aa).

Residues 1–22 (MFTLKKSLLLLFFLGTINLSLC) form the signal peptide. Positions 23-46 (EQERNAEEERRDDLGERQAEVEKR) are excised as a propeptide. Position 56 is a serine amide (Ser56).

This sequence belongs to the frog skin active peptide (FSAP) family. Temporin subfamily. Expressed by the skin glands.

Its subcellular location is the secreted. Its function is as follows. Antimicrobial peptide with weak activity against Gram-positive and Gram-negative bacteria and against fungi. Has been tested against S.aureus (MIC=15.0 ug/mL), B.pumilus (no activity detected), B.cereus (no activity detected), E.coli (MIC=30.0 ug/mL), B.dysenteriae (MIC=60.0 ug/mL), A.cacoaceticus (MIC=75.0 ug/mL), P.aeruginosa (MIC=25.0 ug/mL) and C.albicans (MIC=15.0 ug/mL). Also shows a weak hemolytic activity. The sequence is that of Temporin-ALk from Amolops loloensis (Lolokou Sucker Frog).